Reading from the N-terminus, the 371-residue chain is Phospholipid-transporting ATPase accessory subunit ivn1 (371 aa).

Residues 1–39 lie on the Cytoplasmic side of the membrane; it reads MSQTEIVKKPKHKRFKRPDKSRFVQQTLPAWQFIFTPWT. The helical transmembrane segment at 40–60 threads the bilayer; it reads VLPLLFLLGIVFAPLGAGMFV. Topologically, residues 61–325 are extracellular; it reads ASRRVKELRI…STTSVIGGKN (265 aa). 2 disulfide bridges follow: C75/C111 and C166/C181. N99 carries an N-linked (GlcNAc...) asparagine glycan. N190, N212, N216, N233, N284, and N297 each carry an N-linked (GlcNAc...) asparagine glycan. Residues 326–346 traverse the membrane as a helical segment; the sequence is YFLGILYFVIGGLCAASGVIL. Topologically, residues 347–371 are cytoplasmic; the sequence is SIACLIKPRRVGDPRYLSWNRGKSS.

It belongs to the CDC50/LEM3 family.

It localises to the endoplasmic reticulum membrane. Functionally, accessory component of a P4-ATPase flippase complex which catalyzes the hydrolysis of ATP coupled to the transport of aminophospholipids from the lumenal to the cytosolic leaflet of membranes and ensures the maintenance of asymmetric distribution of phospholipids. The protein is Phospholipid-transporting ATPase accessory subunit ivn1 (ivn1) of Schizosaccharomyces pombe (strain 972 / ATCC 24843) (Fission yeast).